The sequence spans 528 residues: Protein DA1-related 2 (528 aa).

Residues 60–108 (SNGGGSGAHTNHHPPQFQEDENMVFPLPPSSLDDRSRGARDKEELDRSI) are disordered. A compositionally biased stretch (basic and acidic residues) spans 91–106 (LDDRSRGARDKEELDR). One can recognise a UIM 1 domain in the interval 99-118 (RDKEELDRSISLSLADNTKR). The UIM 2; degenerate domain maps to 127-148 (DNNRDFPRPFHGGLNPSSFIPP). One can recognise an LIM zinc-binding domain in the interval 160–220 (RICGGCNSDI…KLCFKELTHP (61 aa)). The disordered stretch occupies residues 447–474 (DPSTRNLPSTSSVATSSSSSFSNKKGGK). Residues 455–470 (STSSVATSSSSSFSNK) show a composition bias toward low complexity.

As to quaternary structure, interacts with ubiquitin, TCP14 and TCP15. Polyubiquitinated by DA2. Expressed in the vasculature of leaves, inflorescence stems, flowers, hypocotyls, and primary and lateral roots. In roots, expressed in phloem companion cells.

Its function is as follows. Acts redundantly with DA1 and DAR1 to regulate endoreduplication during leaf development. Together with DA1 and DAR1, modulates the protein stability of the transcription factors TCP14 and TCP15, which repress endoreduplication by directly regulating the expression of cell-cycle genes. Involved in root phloem development. Is an essential component of early phloem development, long-distance delivery of phloem content, and proper maintenance of root system architecture. Involved in the control of root meristem size. Functions genetically downstream of cytokinin and IAA3 to maintain normal auxin distribution by influencing polar auxin transport. Acts through the PLETHORA pathway, upstream of PLT1 and PLT2 to influence root stem cell niche activity and thus control root meristem size. The protein is Protein DA1-related 2 of Arabidopsis thaliana (Mouse-ear cress).